The following is a 49-amino-acid chain: Unknown protein from spot 75 of 2D-PAGE of etiolated coleoptile (49 aa).

This is Unknown protein from spot 75 of 2D-PAGE of etiolated coleoptile from Zea mays (Maize).